A 192-amino-acid polypeptide reads, in one-letter code: Probable cobalt-precorrin-6B C(15)-methyltransferase (decarboxylating) (192 aa).

S-adenosyl-L-methionine-binding positions include T20, 44-48 (GSGTG), E68, and A96.

It belongs to the methyltransferase superfamily. Archaeal-type CbiT family.

The catalysed reaction is Co-precorrin-6B + S-adenosyl-L-methionine = Co-precorrin-7 + S-adenosyl-L-homocysteine + CO2. The protein operates within cofactor biosynthesis; adenosylcobalamin biosynthesis; cob(II)yrinate a,c-diamide from sirohydrochlorin (anaerobic route): step 8/10. Functionally, catalyzes the methylation of C-15 in cobalt-precorrin-6B followed by the decarboxylation of C-12 to form cobalt-precorrin-7. The polypeptide is Probable cobalt-precorrin-6B C(15)-methyltransferase (decarboxylating) (Sulfolobus acidocaldarius (strain ATCC 33909 / DSM 639 / JCM 8929 / NBRC 15157 / NCIMB 11770)).